The chain runs to 784 residues: Armadillo repeat-containing X-linked protein 2 (784 aa).

Over 1-6 (MSRARD) the chain is Mitochondrial intermembrane. Mitochondrion outer membrane (MOM)-targeting sequence regions lie at residues 1–6 (MSRARD) and 26–40 (KYTRGKDQKKKRLTK). The helical; Signal-anchor transmembrane segment at 7-27 (AGCVAAGIVIGASAWYCVYKY) threads the bilayer. At 28 to 784 (TRGKDQKKKR…VKVIKLVNKF (757 aa)) the chain is on the cytoplasmic side. Disordered regions lie at residues 328–353 (TSGGAAVPSGGAATPRAAASTQRTAS), 388–461 (HSGA…ELGM), and 488–522 (PESEEGESGWTDTESDSDSEPDVPQRGKGKRTIPM). Positions 396-418 (GTSGSSKTAATGKKAAPGAHTGA) are enriched in low complexity. Residues 488 to 508 (PESEEGESGWTDTESDSDSEP) show a composition bias toward acidic residues. ARM repeat units lie at residues 528–568 (PYEI…NNAN), 570–609 (SCNQETIRKLGGLPIIANMINKTDPHIKEKALMAMNNLSE), and 650–689 (ITNDYQHLLVNSIANFFRLLSQGGGKIKVEILKILSNFAE).

It belongs to the eutherian X-chromosome-specific Armcx family. In terms of tissue distribution, widely expressed in the adult nervous tissue, especially in the forebrain, including the cerebral cortex, hippocampus and thalamus.

It is found in the mitochondrion. The protein localises to the mitochondrion outer membrane. Functionally, may regulate the dynamics and distribution of mitochondria in neural cells. The polypeptide is Armadillo repeat-containing X-linked protein 2 (Armcx2) (Mus musculus (Mouse)).